The sequence spans 574 residues: Sentrin-specific protease 3 (574 aa).

The tract at residues 1–125 is disordered; it reads MKETIQGTGS…PTHRKTCSQR (125 aa). A phosphoserine mark is found at serine 54, serine 73, and serine 75. The segment covering 74-93 has biased composition (acidic residues); the sequence is ASEEEEEEEEEEDEDEEEEV. A compositionally biased stretch (basic residues) spans 112 to 125; that stretch reads RPSRPTHRKTCSQR. 2 consecutive short sequence motifs (nuclear localization signal) follow at residues 125–128 and 153–159; these read RRRR and RHRGRRR. A disordered region spans residues 161-181; it reads LAHPKNHLSPQQGGATPQVPS. A Phosphoserine modification is found at serine 169. Threonine 176 carries the phosphothreonine modification. Serine 181, serine 188, serine 212, and serine 232 each carry phosphoserine. A protease region spans residues 386–543; that stretch reads HVLTMDDLGT…AFVLQYCKHL (158 aa). Catalysis depends on residues histidine 465 and aspartate 482. Cysteine 532 acts as the Nucleophile in catalysis.

It belongs to the peptidase C48 family. As to quaternary structure, component of some MLL1/MLL complex, at least composed of the core components KMT2A/MLL1, ASH2L, HCFC1/HCF1, WDR5 and RBBP5, as well as the facultative components BACC1, CHD8, E2F6, HSP70, INO80C, KANSL1, LAS1L, MAX, MCRS1, MGA, MYST1/MOF, PELP1, PHF20, PRP31, RING2, RUVB1/TIP49A, RUVB2/TIP49B, SENP3, TAF1, TAF4, TAF6, TAF7, TAF9 and TEX10. Interacts with EP300, NPM1 and CDCA8. Component of the 5FMC complex, at least composed of PELP1, LAS1L, TEX10, WDR18 and SENP3; the complex interacts with methylated CHTOP and ZNF148. Interacts with NOL9. Interacts with CCAR2.

The protein resides in the nucleus. The protein localises to the nucleolus. It is found in the nucleoplasm. It localises to the cytoplasm. Its activity is regulated as follows. On oxidative stress, SENP3 degradation is blocked by inhibition of its ubiquitination, which stabilizes it as it accumulates in the nucleoplasm. Protease that releases SUMO2 and SUMO3 monomers from sumoylated substrates, but has only weak activity against SUMO1 conjugates. Deconjugates SUMO2 from MEF2D, which increases its transcriptional activation capability. Deconjugates SUMO2 and SUMO3 from CDCA8. Redox sensor that, when redistributed into nucleoplasm, can act as an effector to enhance HIF1A transcriptional activity by desumoylating EP300. Required for rRNA processing through deconjugation of SUMO2 and SUMO3 from nucleophosmin, NPM1. Plays a role in the regulation of sumoylation status of ZNF148. Functions as a component of the Five Friends of Methylated CHTOP (5FMC) complex; the 5FMC complex is recruited to ZNF148 by methylated CHTOP, leading to desumoylation of ZNF148 and subsequent transactivation of ZNF148 target genes. Deconjugates SUMO2 from KAT5. Catalyzes desumoylation of MRE11. The sequence is that of Sentrin-specific protease 3 from Homo sapiens (Human).